A 221-amino-acid polypeptide reads, in one-letter code: MATLSQEATLVHQALVARGLETPLRSPVREMDDDARKQLIAGHMTEIMQLLNLDLEDDSLAETPQRIAKMYVNEVFSGLDYANFPKITVIENKMKVDEMVTVRDITLTSTCEHHFVIIDGQATVAYIPKDKVIGLSKINRIVQFFSSRPQVQERLTQQILVALQTLLGTSNVAVSIDAVHYCVKARGIRDATSATTTTSLGGLFKSSQNTRQEFLRSVRHR.

Residues Cys-111, His-114, and Cys-182 each coordinate Zn(2+).

Belongs to the GTP cyclohydrolase I family. In terms of assembly, homomer.

The enzyme catalyses GTP + H2O = 7,8-dihydroneopterin 3'-triphosphate + formate + H(+). The protein operates within cofactor biosynthesis; 7,8-dihydroneopterin triphosphate biosynthesis; 7,8-dihydroneopterin triphosphate from GTP: step 1/1. The sequence is that of GTP cyclohydrolase 1 from Erwinia tasmaniensis (strain DSM 17950 / CFBP 7177 / CIP 109463 / NCPPB 4357 / Et1/99).